A 132-amino-acid polypeptide reads, in one-letter code: Small ribosomal subunit protein uS8 (132 aa).

The protein belongs to the universal ribosomal protein uS8 family. Part of the 30S ribosomal subunit. Contacts proteins S5 and S12.

Functionally, one of the primary rRNA binding proteins, it binds directly to 16S rRNA central domain where it helps coordinate assembly of the platform of the 30S subunit. This Granulibacter bethesdensis (strain ATCC BAA-1260 / CGDNIH1) protein is Small ribosomal subunit protein uS8.